The chain runs to 31 residues: Cytochrome b6-f complex subunit 6 (31 aa).

A helical membrane pass occupies residues 4-26 (ITSYFGFLLAASTITPALLIGLN).

It belongs to the PetL family. In terms of assembly, the 4 large subunits of the cytochrome b6-f complex are cytochrome b6, subunit IV (17 kDa polypeptide, PetD), cytochrome f and the Rieske protein, while the 4 small subunits are PetG, PetL, PetM and PetN. The complex functions as a dimer.

Its subcellular location is the plastid. It is found in the chloroplast thylakoid membrane. Functionally, component of the cytochrome b6-f complex, which mediates electron transfer between photosystem II (PSII) and photosystem I (PSI), cyclic electron flow around PSI, and state transitions. PetL is important for photoautotrophic growth as well as for electron transfer efficiency and stability of the cytochrome b6-f complex. The chain is Cytochrome b6-f complex subunit 6 from Calycanthus floridus var. glaucus (Eastern sweetshrub).